The following is a 49-amino-acid chain: Photosystem II reaction center protein K (49 aa).

The propeptide occupies methionine 1–glycine 12. The chain crosses the membrane as a helical span at residues isoleucine 24–alanine 44.

This sequence belongs to the PsbK family. As to quaternary structure, PSII is composed of 1 copy each of membrane proteins PsbA, PsbB, PsbC, PsbD, PsbE, PsbF, PsbH, PsbI, PsbJ, PsbK, PsbL, PsbM, PsbT, PsbX, PsbY, PsbZ, Psb30/Ycf12, at least 3 peripheral proteins of the oxygen-evolving complex and a large number of cofactors. It forms dimeric complexes.

It localises to the plastid. The protein localises to the chloroplast thylakoid membrane. One of the components of the core complex of photosystem II (PSII). PSII is a light-driven water:plastoquinone oxidoreductase that uses light energy to abstract electrons from H(2)O, generating O(2) and a proton gradient subsequently used for ATP formation. It consists of a core antenna complex that captures photons, and an electron transfer chain that converts photonic excitation into a charge separation. This Phacus acuminatus protein is Photosystem II reaction center protein K.